An 83-amino-acid polypeptide reads, in one-letter code: Protein midgut expression 1 (83 aa).

As to expression, endoderm-specific pattern of expression during embryogenesis; anterior and posterior midgut primordia.

Its function is as follows. Involved in morphogenesis and development. In Drosophila melanogaster (Fruit fly), this protein is Protein midgut expression 1 (mex1).